A 133-amino-acid polypeptide reads, in one-letter code: Small ribosomal subunit protein uS8 (133 aa).

Belongs to the universal ribosomal protein uS8 family. In terms of assembly, part of the 30S ribosomal subunit. Contacts proteins S5 and S12.

Functionally, one of the primary rRNA binding proteins, it binds directly to 16S rRNA central domain where it helps coordinate assembly of the platform of the 30S subunit. The protein is Small ribosomal subunit protein uS8 of Prochlorococcus marinus (strain SARG / CCMP1375 / SS120).